Here is a 262-residue protein sequence, read N- to C-terminus: Trypsin theta (262 aa).

The first 19 residues, 1–19 (MHRLVVLLVCLAVGSACAG), serve as a signal peptide directing secretion. Positions 20–34 (TVGVSNGDPFEREGR) are cleaved as a propeptide — activation peptide. Residues 35–260 (IVGGEDTTIG…LRKWILNASE (226 aa)) form the Peptidase S1 domain. An intrachain disulfide couples C61 to C77. Catalysis depends on charge relay system residues H76 and D121. 2 cysteine pairs are disulfide-bonded: C186–C203 and C212–C236. Residue S216 is the Charge relay system of the active site.

It belongs to the peptidase S1 family.

Its subcellular location is the secreted. It localises to the extracellular space. It catalyses the reaction Preferential cleavage: Arg-|-Xaa, Lys-|-Xaa.. In Drosophila melanogaster (Fruit fly), this protein is Trypsin theta (thetaTry).